Here is a 201-residue protein sequence, read N- to C-terminus: Small ribosomal subunit protein uS4c (201 aa).

One can recognise an S4 RNA-binding domain in the interval 89 to 152 (MRLDNILFRL…NSRTLVQNLL (64 aa)).

Belongs to the universal ribosomal protein uS4 family. As to quaternary structure, part of the 30S ribosomal subunit. Contacts protein S5. The interaction surface between S4 and S5 is involved in control of translational fidelity.

It is found in the plastid. It localises to the chloroplast. One of the primary rRNA binding proteins, it binds directly to 16S rRNA where it nucleates assembly of the body of the 30S subunit. Its function is as follows. With S5 and S12 plays an important role in translational accuracy. This chain is Small ribosomal subunit protein uS4c (rps4), found in Arabidopsis thaliana (Mouse-ear cress).